A 270-amino-acid chain; its full sequence is Phosphatidylglycerol--prolipoprotein diacylglyceryl transferase (270 aa).

7 consecutive transmembrane segments (helical) span residues 14–34 (VAFT…ILAL), 60–80 (YFFW…IAIY), 103–123 (FVGI…LATI), 133–153 (LWQL…FGRI), 181–201 (PSQL…LFFY), 209–229 (GELI…CEFF), and 235–255 (GIGF…LMFF). Arg-152 is a binding site for a 1,2-diacyl-sn-glycero-3-phospho-(1'-sn-glycerol).

Belongs to the Lgt family.

It is found in the cell inner membrane. It carries out the reaction L-cysteinyl-[prolipoprotein] + a 1,2-diacyl-sn-glycero-3-phospho-(1'-sn-glycerol) = an S-1,2-diacyl-sn-glyceryl-L-cysteinyl-[prolipoprotein] + sn-glycerol 1-phosphate + H(+). The protein operates within protein modification; lipoprotein biosynthesis (diacylglyceryl transfer). Its function is as follows. Catalyzes the transfer of the diacylglyceryl group from phosphatidylglycerol to the sulfhydryl group of the N-terminal cysteine of a prolipoprotein, the first step in the formation of mature lipoproteins. The sequence is that of Phosphatidylglycerol--prolipoprotein diacylglyceryl transferase from Campylobacter curvus (strain 525.92).